The chain runs to 209 residues: Guanylate kinase (209 aa).

The region spanning 9-188 is the Guanylate kinase-like domain; the sequence is GIMLVISSPS…SVYQIKCIFT (180 aa). 16–23 is an ATP binding site; sequence SPSGGGKT.

The protein belongs to the guanylate kinase family.

Its subcellular location is the cytoplasm. The catalysed reaction is GMP + ATP = GDP + ADP. Essential for recycling GMP and indirectly, cGMP. The polypeptide is Guanylate kinase (Ehrlichia chaffeensis (strain ATCC CRL-10679 / Arkansas)).